We begin with the raw amino-acid sequence, 241 residues long: Megakaryocyte and platelet inhibitory receptor G6b (241 aa).

Positions 1-17 are cleaved as a signal peptide; that stretch reads MAVFLQLLPLLLSRAQG. Residues 18–142 are Extracellular-facing; that stretch reads NPGASLDGRP…GPTHGSVYPQ (125 aa). Asparagine 32 carries an N-linked (GlcNAc...) asparagine glycan. A helical membrane pass occupies residues 143–163; that stretch reads LLIPLLGAGLVLGLGALGLVW. Residues 164–241 lie on the Cytoplasmic side of the membrane; sequence WLHRRLPPQP…DASTIYAVVV (78 aa). 2 short sequence motifs (ITIM motif) span residues 209 to 214 and 235 to 240; these read LLYADL and TIYAVV. Position 211 is a phosphotyrosine (tyrosine 211).

As to quaternary structure, interacts (via ITIM motif) with PTPN6 and PTPN11. Binds to heparin. Post-translationally, all isoforms are N-glycosylated. Isoform E is O-glycosylated. In terms of processing, phosphorylated. In terms of tissue distribution, expressed in platelets. Expressed in a restricted set of hematopoietic cell lines including the erythroleukemia cell line K-562 and the T-cell leukemia cell lines MOLT-4 and Jurkat. Not detected in the monocyte-like cell line U-937, the B-cell-like cell line Raji, the fibroblast cell lines TK and HeLa, or the natural killer cell lines NKL, NK 62 and YT.

It is found in the endoplasmic reticulum. The protein resides in the golgi apparatus. The protein localises to the cell membrane. Inhibitory receptor that acts as a critical regulator of hematopoietic lineage differentiation, megakaryocyte function and platelet production. Inhibits platelet aggregation and activation by agonists such as ADP and collagen-related peptide. This regulation of megakaryocate function as well as platelet production ann activation is done through the inhibition (via the 2 ITIM motifs) of the receptors CLEC1B and GP6:FcRgamma signaling. Appears to operate in a calcium-independent manner. Functionally, isoform B, displayed in this entry, is the only isoform to contain both a transmembrane region and 2 immunoreceptor tyrosine-based inhibitor motifs (ITIMs) and, thus, the only one which probably has a role of inhibitory receptor. Isoform A may be the activating counterpart of isoform B. In Homo sapiens (Human), this protein is Megakaryocyte and platelet inhibitory receptor G6b.